The following is a 61-amino-acid chain: Bacteriocin leucocin-B (61 aa).

The propeptide occupies 1-24 (MNNMKSADNYQQLDNNALEQVVGG). C33 and C38 are oxidised to a cystine.

The protein belongs to the bacteriocin class IIA/YGNGV family.

It localises to the secreted. Its function is as follows. Active against L.monocytogenes and several lactic acid bacteria. The protein is Bacteriocin leucocin-B of Leuconostoc carnosum.